The chain runs to 456 residues: MAEKHQDKMTNAMNNSKLYLIQSFGCQMNERDAESLAGMLEDLGYCPTSAQEEADIILLNTCCVRETAESKVFGLLGRLRKLKVAKPDLILGVCGCMSQQEDAAKRIRRSFPFVDLIFGTHNIHELPRMIHQVQENHEAVLEVWATEKGITESIPVKRKDKLKAWVTIMYGCNNFCTYCIVPYVRGRERSRQPEDIIDEIKELVQEGYKEVTLLGQNVNSYGKDFKNNYRFADLLMAIDDITGLERVRFMTSHPRDFDQRLIEVVASAKKVCEHYHLPAQAGSNRVLKMMNRGYTREHYLELIRKIKERVPNASITADLMVGFPGETEEDFQETLDLVKQVRYDSAFTFVYNIRSGTPAAKLEQVSEEVKSERIQRLIELQNLISLENNQREEGRVLEVLVEGETKTNPDLLAGRTRTNKLVVFQGSGHLPGQLVQIRITKGRPNLLEGEVVPNGT.

The region spanning 17-135 (KLYLIQSFGC…LPRMIHQVQE (119 aa)) is the MTTase N-terminal domain. Residues C26, C62, C96, C172, C176, and C179 each coordinate [4Fe-4S] cluster. The 230-residue stretch at 158–387 (RKDKLKAWVT…IELQNLISLE (230 aa)) folds into the Radical SAM core domain. Residues 390-453 (QREEGRVLEV…PNLLEGEVVP (64 aa)) form the TRAM domain.

This sequence belongs to the methylthiotransferase family. MiaB subfamily. In terms of assembly, monomer. [4Fe-4S] cluster serves as cofactor.

It localises to the cytoplasm. It catalyses the reaction N(6)-dimethylallyladenosine(37) in tRNA + (sulfur carrier)-SH + AH2 + 2 S-adenosyl-L-methionine = 2-methylsulfanyl-N(6)-dimethylallyladenosine(37) in tRNA + (sulfur carrier)-H + 5'-deoxyadenosine + L-methionine + A + S-adenosyl-L-homocysteine + 2 H(+). Catalyzes the methylthiolation of N6-(dimethylallyl)adenosine (i(6)A), leading to the formation of 2-methylthio-N6-(dimethylallyl)adenosine (ms(2)i(6)A) at position 37 in tRNAs that read codons beginning with uridine. This chain is tRNA-2-methylthio-N(6)-dimethylallyladenosine synthase, found in Desulforamulus reducens (strain ATCC BAA-1160 / DSM 100696 / MI-1) (Desulfotomaculum reducens).